Here is a 227-residue protein sequence, read N- to C-terminus: MTAAAPVITIDGPSGAGKGTLCKAMAEALQWHLLDSGAIYRVLALAALHHHVDVASEEALVPLAAHLDVRFISTHGNLEVILEGEDVSGEIRTQEVANAASQVAAFPRVREALLRRQRAFREAPGLIADGRDMGTVVFPDAPVKIFLDASSEERAQRRMLQLQEKGFSVNFDRLLSEIKERDDRDRNRAVAPLVPAEDALVLDSTSLTIEQVIEKALQYARQKLALA.

12-20 (GPSGAGKGT) is an ATP binding site.

Belongs to the cytidylate kinase family. Type 1 subfamily.

The protein localises to the cytoplasm. It carries out the reaction CMP + ATP = CDP + ADP. The catalysed reaction is dCMP + ATP = dCDP + ADP. In Enterobacter sp. (strain 638), this protein is Cytidylate kinase.